The sequence spans 868 residues: Translation initiation factor IF-2 (868 aa).

Over residues 103 to 183 the composition is skewed to basic and acidic residues; the sequence is RSELPETSDR…RQAAAERETV (81 aa). The tract at residues 103–274 is disordered; it reads RSELPETSDR…GRPMLMPEQK (172 aa). The span at 190–207 shows a compositional bias: pro residues; sequence VAAPPIPRPAPEPRPPAR. A compositionally biased stretch (basic and acidic residues) spans 213-254; the sequence is PKAEAPRAHPAERETEARGDKRSAGLSRKDEYRELQGDDFRK. Basic residues predominate over residues 255 to 264; that stretch reads GGGKRKKPKT. Positions 369 to 538 constitute a tr-type G domain; the sequence is PRPPVVTIMG…LVQAEVLELK (170 aa). The G1 stretch occupies residues 378–385; that stretch reads GHVDHGKT. 378–385 provides a ligand contact to GTP; that stretch reads GHVDHGKT. The interval 403 to 407 is G2; that stretch reads GITQH. The segment at 424–427 is G3; the sequence is DTPG. GTP is bound by residues 424–428 and 478–481; these read DTPGH and NKMD. The segment at 478-481 is G4; it reads NKMD. The interval 514–516 is G5; the sequence is SAK.

It belongs to the TRAFAC class translation factor GTPase superfamily. Classic translation factor GTPase family. IF-2 subfamily.

The protein resides in the cytoplasm. Its function is as follows. One of the essential components for the initiation of protein synthesis. Protects formylmethionyl-tRNA from spontaneous hydrolysis and promotes its binding to the 30S ribosomal subunits. Also involved in the hydrolysis of GTP during the formation of the 70S ribosomal complex. The protein is Translation initiation factor IF-2 of Methylococcus capsulatus (strain ATCC 33009 / NCIMB 11132 / Bath).